The sequence spans 172 residues: Ribosome maturation factor RimM (172 aa).

A PRC barrel domain is found at 96-168 (DGEFYYHEII…RVQVELMEGL (73 aa)).

It belongs to the RimM family. In terms of assembly, binds ribosomal protein uS19.

The protein localises to the cytoplasm. An accessory protein needed during the final step in the assembly of 30S ribosomal subunit, possibly for assembly of the head region. Essential for efficient processing of 16S rRNA. May be needed both before and after RbfA during the maturation of 16S rRNA. It has affinity for free ribosomal 30S subunits but not for 70S ribosomes. In Streptococcus agalactiae serotype III (strain NEM316), this protein is Ribosome maturation factor RimM.